Reading from the N-terminus, the 329-residue chain is MSAFFDLLKSQTASHPPIWLLRQVGRYMPPYQELKGSQSLKTFFHNTEAIVEATLLGPSLLHVDAAILFADILSILDGFAVTYDFAPGPRIQFSPEQPFTFTSDPQTIFSYLLDAIRTLKQKLPVPLIVFAASPFTLACYLIDGGASKDFSKTMSFLYVYPEKFDQLISTIIEGTAIYLKTQMDAGAAAVQLFESSSLRLPSALFTRYVTEPNRRLIAKLKEQAIPVSLFCRCFEENFYTLQATQADTLHPDYHVDLHRIQKNLMLSLQGNLDPAIFLLPQEKLLHYVEAFLVPLRTYPNFIFNSGHGILPETPLENVQLVVSYVQRQL.

Residues 22-26, D71, Y140, S195, and H307 each bind substrate; that span reads RQVGR.

The protein belongs to the uroporphyrinogen decarboxylase family. As to quaternary structure, homodimer.

It localises to the cytoplasm. The enzyme catalyses uroporphyrinogen III + 4 H(+) = coproporphyrinogen III + 4 CO2. Its pathway is porphyrin-containing compound metabolism; protoporphyrin-IX biosynthesis; coproporphyrinogen-III from 5-aminolevulinate: step 4/4. Its function is as follows. Catalyzes the decarboxylation of four acetate groups of uroporphyrinogen-III to yield coproporphyrinogen-III. The sequence is that of Uroporphyrinogen decarboxylase from Chlamydia pneumoniae (Chlamydophila pneumoniae).